We begin with the raw amino-acid sequence, 842 residues long: Non-motile and phage-resistance protein (842 aa).

Helical transmembrane passes span 29 to 50 (VFVR…AFGV), 283 to 303 (GAFS…LLMI), and 343 to 363 (VYLS…VVSG). The PAS domain maps to 318-389 (SERRFRLAVE…QALANAAMYG (72 aa)). Residues 607–830 (NMSHELRTPL…TVSFTLPVRH (224 aa)) enclose the Histidine kinase domain. Histidine 610 carries the post-translational modification Phosphohistidine; by autocatalysis.

Its subcellular location is the cell membrane. The enzyme catalyses ATP + protein L-histidine = ADP + protein N-phospho-L-histidine.. In terms of biological role, member of the two-component regulatory system involved in the regulation of polar organelle development. PleC functions as a membrane-associated protein kinase that transfers phosphate to the response regulator PleD, leading to its activation. The chain is Non-motile and phage-resistance protein (pleC) from Caulobacter vibrioides (strain ATCC 19089 / CIP 103742 / CB 15) (Caulobacter crescentus).